A 171-amino-acid chain; its full sequence is Small ribosomal subunit protein uS5 (171 aa).

The S5 DRBM domain maps to 14–77 (LKEKLVMVNR…EKAKKKLLKI (64 aa)).

This sequence belongs to the universal ribosomal protein uS5 family. In terms of assembly, part of the 30S ribosomal subunit. Contacts proteins S4 and S8.

With S4 and S12 plays an important role in translational accuracy. In terms of biological role, located at the back of the 30S subunit body where it stabilizes the conformation of the head with respect to the body. This is Small ribosomal subunit protein uS5 from Karelsulcia muelleri (strain GWSS) (Sulcia muelleri).